Here is a 181-residue protein sequence, read N- to C-terminus: Alkyl hydroperoxide reductase AhpD (181 aa).

C131 (proton donor) is an active-site residue. A disulfide bridge connects residues C131 and C134. C134 (cysteine sulfenic acid (-SOH) intermediate) is an active-site residue.

The protein belongs to the AhpD family.

It catalyses the reaction N(6)-[(R)-dihydrolipoyl]-L-lysyl-[lipoyl-carrier protein] + a hydroperoxide = N(6)-[(R)-lipoyl]-L-lysyl-[lipoyl-carrier protein] + an alcohol + H2O. In terms of biological role, antioxidant protein with alkyl hydroperoxidase activity. Required for the reduction of the AhpC active site cysteine residues and for the regeneration of the AhpC enzyme activity. The polypeptide is Alkyl hydroperoxide reductase AhpD (Rhodopseudomonas palustris (strain BisB18)).